A 720-amino-acid polypeptide reads, in one-letter code: Polyribonucleotide nucleotidyltransferase (720 aa).

Mg(2+)-binding residues include D487 and D493. One can recognise a KH domain in the interval 554–613 (PRITTISIPKEKIREVIGTGGKVIREICEQTGAKIDIDDDGTIKVASVDADAAQRAIDWI). Positions 623 to 691 (GVIYNGKVVK…DRGKVKLSMK (69 aa)) constitute an S1 motif domain. A disordered region spans residues 695–720 (QTTGEDISAQLEAERAASKRERHHED). Over residues 706–720 (EAERAASKRERHHED) the composition is skewed to basic and acidic residues.

This sequence belongs to the polyribonucleotide nucleotidyltransferase family. Requires Mg(2+) as cofactor.

It is found in the cytoplasm. It catalyses the reaction RNA(n+1) + phosphate = RNA(n) + a ribonucleoside 5'-diphosphate. Involved in mRNA degradation. Catalyzes the phosphorolysis of single-stranded polyribonucleotides processively in the 3'- to 5'-direction. This Paramagnetospirillum magneticum (strain ATCC 700264 / AMB-1) (Magnetospirillum magneticum) protein is Polyribonucleotide nucleotidyltransferase.